Here is a 119-residue protein sequence, read N- to C-terminus: Small ribosomal subunit protein uS10 (119 aa).

The protein belongs to the universal ribosomal protein uS10 family. In terms of assembly, component of the small ribosomal subunit. Mature ribosomes consist of a small (40S) and a large (60S) subunit. The 40S subunit contains about 32 different proteins and 1 molecule of RNA (18S). The 60S subunit contains 45 different proteins and 3 molecules of RNA (25S, 5.8S and 5S).

Its subcellular location is the cytoplasm. Its function is as follows. Component of the ribosome, a large ribonucleoprotein complex responsible for the synthesis of proteins in the cell. The small ribosomal subunit (SSU) binds messenger RNAs (mRNAs) and translates the encoded message by selecting cognate aminoacyl-transfer RNA (tRNA) molecules. The large subunit (LSU) contains the ribosomal catalytic site termed the peptidyl transferase center (PTC), which catalyzes the formation of peptide bonds, thereby polymerizing the amino acids delivered by tRNAs into a polypeptide chain. The nascent polypeptides leave the ribosome through a tunnel in the LSU and interact with protein factors that function in enzymatic processing, targeting, and the membrane insertion of nascent chains at the exit of the ribosomal tunnel. The protein is Small ribosomal subunit protein uS10 (RPS20) of Candida albicans (strain SC5314 / ATCC MYA-2876) (Yeast).